The sequence spans 198 residues: Recombination protein RecR (198 aa).

The segment at 57-72 (CSICGNLTDDDPCHIC) adopts a C4-type zinc-finger fold. One can recognise a Toprim domain in the interval 80-175 (TTILVVEDAK…KVTRLARGLA (96 aa)).

Belongs to the RecR family.

In terms of biological role, may play a role in DNA repair. It seems to be involved in an RecBC-independent recombinational process of DNA repair. It may act with RecF and RecO. In Streptococcus pyogenes serotype M5 (strain Manfredo), this protein is Recombination protein RecR.